We begin with the raw amino-acid sequence, 321 residues long: NADH-ubiquinone oxidoreductase chain 1 (321 aa).

8 consecutive transmembrane segments (helical) span residues 5 to 25, 74 to 94, 104 to 124, 151 to 171, 175 to 195, 227 to 247, 256 to 276, and 296 to 316; these read LVTL…AFLT, LLIL…APIP, LGLL…LWAG, GIIL…LLTI, YTWL…STLA, FFLA…ILFI, ELFL…FLWI, and FLPM…SISG.

The protein belongs to the complex I subunit 1 family.

It localises to the mitochondrion inner membrane. The enzyme catalyses a ubiquinone + NADH + 5 H(+)(in) = a ubiquinol + NAD(+) + 4 H(+)(out). Its function is as follows. Core subunit of the mitochondrial membrane respiratory chain NADH dehydrogenase (Complex I) that is believed to belong to the minimal assembly required for catalysis. Complex I functions in the transfer of electrons from NADH to the respiratory chain. The immediate electron acceptor for the enzyme is believed to be ubiquinone. The protein is NADH-ubiquinone oxidoreductase chain 1 (MT-ND1) of Varanus baritji (Black-spotted ridge-tailed monitor).